Consider the following 185-residue polypeptide: Ribosome-recycling factor (185 aa).

Belongs to the RRF family.

The protein localises to the cytoplasm. Its function is as follows. Responsible for the release of ribosomes from messenger RNA at the termination of protein biosynthesis. May increase the efficiency of translation by recycling ribosomes from one round of translation to another. The protein is Ribosome-recycling factor of Neisseria gonorrhoeae (strain ATCC 700825 / FA 1090).